A 1601-amino-acid chain; its full sequence is Ras guanine nucleotide exchange factor glfB (1601 aa).

Disordered stretches follow at residues 43-140 (PLLA…KEWD), 188-256 (DLLI…TTTT), 310-461 (SPQR…APDS), and 475-630 (LTTT…VKKG). Residues 45 to 55 (LAPPAPPPPPT) are compositionally biased toward pro residues. Polar residues predominate over residues 57–69 (QEINIGSGNSTFI). Over residues 70–126 (SSNNNNSNNNNNNNSNNNNNNNLNNSNNNNNNLNSNNNNNNNNNNNNNNGNNNNNSN) the composition is skewed to low complexity. Ser197 is modified (phosphoserine). Thr201 is modified (phosphothreonine). 2 stretches are compositionally biased toward low complexity: residues 211–256 (QQQQ…TTTT) and 310–330 (SPQR…GVVV). Residues 331–359 (ADEESDSSEEESDSSEEESDEYTDEESET) show a composition bias toward acidic residues. Polar residues predominate over residues 384–398 (PLTSVNSNDNTSSGT). Low complexity-rich tracts occupy residues 435–458 (TAVA…TTVA), 475–493 (LTTT…TQSI), and 500–520 (SQQR…AITK). Over residues 521–533 (PTKDAKDKKDPAK) the composition is skewed to basic and acidic residues. Residues 558–577 (VPTGTSPPVSSSTSISSSTG) are compositionally biased toward low complexity. Residues 578–596 (IKKDKVKLSKEEKDRIKKE) are compositionally biased toward basic and acidic residues. A Rho-GAP domain is found at 649–836 (VRLTQLVLSN…LIIDNYVFLF (188 aa)). An N-terminal Ras-GEF domain is found at 851 to 983 (GKMIISEGSI…TINDFLKLPK (133 aa)). The Ras-GEF domain occupies 1021 to 1255 (SAMEIAEQCT…ADLSLKCEPP (235 aa)). Residues 1262–1601 (YNAPADIVDE…QESVPSTNAE (340 aa)) form an N-terminal F-actin-binding domain region. The tract at residues 1443 to 1474 (SNVEKEKLSSSQEQQEQQEQKQQEQQQQQQEP) is disordered. Low complexity predominate over residues 1465–1474 (QEQQQQQQEP).

As to quaternary structure, interacts with gpaB and rapA. Interacts directly with F-actin. Post-translationally, simultaneously phosphorylated at Ser-197 and Thr-201 after cAMP stimulation.

The protein resides in the cytoplasm. It is found in the cell cortex. The protein localises to the cytoskeleton. Its subcellular location is the cell projection. It localises to the filopodium. The protein resides in the lamellipodium. Functionally, gpaB-activated, rapA-specific guanine nucleotide exchange factor, involved in the regulation of the balance between Ras and Rap signaling at the leading edge of chemotaxing cells. Spatially localized activation of Rap and Ras induces F-actin polymerization at the leading edge of chemotaxing cells through the Rac, PI3K, and TORC2 pathways. Also acts as a key regulator of actin-driven membrane protrusions during processes such as phagocytosis and cytokinesis, possibly by modulating rapA signaling pathways. This is Ras guanine nucleotide exchange factor glfB from Dictyostelium discoideum (Social amoeba).